The sequence spans 252 residues: Imidazole glycerol phosphate synthase subunit HisF (252 aa).

Active-site residues include Asp-11 and Asp-130.

It belongs to the HisA/HisF family. As to quaternary structure, heterodimer of HisH and HisF.

It localises to the cytoplasm. It carries out the reaction 5-[(5-phospho-1-deoxy-D-ribulos-1-ylimino)methylamino]-1-(5-phospho-beta-D-ribosyl)imidazole-4-carboxamide + L-glutamine = D-erythro-1-(imidazol-4-yl)glycerol 3-phosphate + 5-amino-1-(5-phospho-beta-D-ribosyl)imidazole-4-carboxamide + L-glutamate + H(+). It participates in amino-acid biosynthesis; L-histidine biosynthesis; L-histidine from 5-phospho-alpha-D-ribose 1-diphosphate: step 5/9. IGPS catalyzes the conversion of PRFAR and glutamine to IGP, AICAR and glutamate. The HisF subunit catalyzes the cyclization activity that produces IGP and AICAR from PRFAR using the ammonia provided by the HisH subunit. The protein is Imidazole glycerol phosphate synthase subunit HisF of Staphylococcus epidermidis (strain ATCC 35984 / DSM 28319 / BCRC 17069 / CCUG 31568 / BM 3577 / RP62A).